The primary structure comprises 67 residues: Toxin Cex8 (67 aa).

A1 is a signal peptide. An LCN-type CS-alpha/beta domain is found at 2–65; the sequence is KEGYLVNIYT…SYPYPEKSCG (64 aa). 4 disulfides stabilise this stretch: C13-C64, C17-C40, C26-C45, and C30-C47. At C64 the chain carries Cysteine amide. Positions 65–67 are excised as a propeptide; the sequence is GRK.

This sequence belongs to the long (4 C-C) scorpion toxin superfamily. Sodium channel inhibitor family. Beta subfamily. As to expression, expressed by the venom gland.

Its subcellular location is the secreted. Its function is as follows. Beta toxins bind voltage-independently at site-4 of sodium channels (Nav) and shift the voltage of activation toward more negative potentials thereby affecting sodium channel activation and promoting spontaneous and repetitive firing. The polypeptide is Toxin Cex8 (Centruroides exilicauda (Bark scorpion)).